Here is a 236-residue protein sequence, read N- to C-terminus: uncharacterized protein (236 aa).

The next 7 membrane-spanning stretches (helical) occupy residues 32 to 52 (MALA…VEPI), 61 to 81 (FGTI…MGFG), 90 to 110 (ILFW…ALIY), 115 to 135 (IART…YGYS), 144 to 164 (GSFF…NLFL), 167 to 187 (SSLS…LIAW), and 208 to 228 (LSIM…LYLM).

The protein belongs to the BI1 family.

Its subcellular location is the cell membrane. This is an uncharacterized protein from Rickettsia prowazekii (strain Madrid E).